A 173-amino-acid polypeptide reads, in one-letter code: Ribosome maturation factor RimM (173 aa).

In terms of domain architecture, PRC barrel spans 95–169; that stretch reads EGSYYFKDIL…RIEVTLLEGL (75 aa).

This sequence belongs to the RimM family. Binds ribosomal protein uS19.

The protein localises to the cytoplasm. An accessory protein needed during the final step in the assembly of 30S ribosomal subunit, possibly for assembly of the head region. Essential for efficient processing of 16S rRNA. May be needed both before and after RbfA during the maturation of 16S rRNA. It has affinity for free ribosomal 30S subunits but not for 70S ribosomes. In Lactobacillus gasseri (strain ATCC 33323 / DSM 20243 / BCRC 14619 / CIP 102991 / JCM 1131 / KCTC 3163 / NCIMB 11718 / NCTC 13722 / AM63), this protein is Ribosome maturation factor RimM.